Here is a 365-residue protein sequence, read N- to C-terminus: Peptide chain release factor 2 (365 aa).

Gln-252 carries the post-translational modification N5-methylglutamine.

This sequence belongs to the prokaryotic/mitochondrial release factor family. Methylated by PrmC. Methylation increases the termination efficiency of RF2.

The protein resides in the cytoplasm. Peptide chain release factor 2 directs the termination of translation in response to the peptide chain termination codons UGA and UAA. The sequence is that of Peptide chain release factor 2 from Aliivibrio fischeri (strain ATCC 700601 / ES114) (Vibrio fischeri).